A 160-amino-acid polypeptide reads, in one-letter code: MFSSSIRLIVSGFHRTQPLKSPVNSPSVFISVPKFFNSESKSTGTGSRSVAMSSVEKTGSDSGAIENRASRMREKLQKELEPVELVIEDVSYQHAGHAGMKGRTDDETHFNVKIVSKGFEGMNLVKRHRLVYHLLREELDTGLHALSIVSKTPSESPSKD.

The N-terminal 50 residues, 1–50, are a transit peptide targeting the chloroplast; that stretch reads MFSSSIRLIVSGFHRTQPLKSPVNSPSVFISVPKFFNSESKSTGTGSRSV. A compositionally biased stretch (polar residues) spans 39-61; that stretch reads ESKSTGTGSRSVAMSSVEKTGSD. The disordered stretch occupies residues 39-66; that stretch reads ESKSTGTGSRSVAMSSVEKTGSDSGAIE.

Belongs to the bolA/yrbA family. In terms of assembly, interacts in vitro with GRXS14, GRXS15, GRXS16 and GRXS17, but not with GRXC5. Interacts in vivo only with GRXS14 and GRXS16.

It localises to the plastid. Its subcellular location is the chloroplast. Its function is as follows. May act either alone or in interaction with glutaredoxin as a redox-regulated transcriptional regulator, or as a factor regulating Fe-S cluster biogenesis. The glutaredoxin-BOLA1 heterodimers bind a labile, oxygen sensitive iron-sulfur cluster. This Arabidopsis thaliana (Mouse-ear cress) protein is Protein BOLA1, chloroplastic.